The chain runs to 148 residues: Leghemoglobin-1 (148 aa).

Residues 2–146 (GFTDKQEALV…LATAIKKAMK (145 aa)) enclose the Globin domain. Nitrated tyrosine occurs at positions 24 and 29. Ser-44 provides a ligand contact to heme b. A Phosphoserine modification is found at Ser-44. Residue His-61 participates in O2 binding. Positions 93 and 96 each coordinate heme b. Tyr-134 is subject to Nitrated tyrosine.

Belongs to the plant globin family. Monomer. Post-translationally, nitrated in effective nodules and particularly in hypoxic conditions; this mechanism may play a protective role in the symbiosis by buffering toxic peroxynitrite NO(2)(-). Nitration level decrease during nodule senescence. Phosphorylation at Ser-44 disrupts the molecular environment of its porphyrin ring oxygen binding pocket, thus leading to a reduced oxygen consumption and to the delivery of oxygen O(2) to symbiosomes. In terms of tissue distribution, root nodules.

It localises to the cytoplasm. The protein resides in the cytosol. It is found in the nucleus. Functionally, leghemoglobin that reversibly binds oxygen O(2) through a pentacoordinated heme iron. In root nodules, facilitates the diffusion of oxygen to the bacteroids while preventing the bacterial nitrogenase from being inactivated by buffering dioxygen, nitric oxide and carbon monoxide, and promoting the formation of reactive oxygen species (ROS, e.g. H(2)O(2)). This role is essential for symbiotic nitrogen fixation (SNF). The protein is Leghemoglobin-1 of Pisum sativum (Garden pea).